The sequence spans 496 residues: NADP-dependent glyceraldehyde-3-phosphate dehydrogenase (496 aa).

Substrate-binding positions include Arg-116 and 169–170 (NY). NADP(+) contacts are provided by Lys-192, Thr-195, and Asp-230. 245-249 (GGDTG) is an NAD(+) binding site. The active-site Proton acceptor is Glu-264. A substrate-binding site is contributed by 297 to 299 (RCT). The active-site Nucleophile is the Cys-298. Glu-391 is a binding site for NADP(+). Arg-451 is a substrate binding site.

It belongs to the aldehyde dehydrogenase family.

It is found in the cytoplasm. It localises to the cytosol. It carries out the reaction D-glyceraldehyde 3-phosphate + NADP(+) + H2O = (2R)-3-phosphoglycerate + NADPH + 2 H(+). With respect to regulation, competitive inhibition by NADPH, 3-phospho-D-glycerate and ATP. Functionally, important as a means of generating NADPH for biosynthetic reactions. May be a main source of cytosolic NADPH for mannitol biosynthesis in leaves. The sequence is that of NADP-dependent glyceraldehyde-3-phosphate dehydrogenase from Apium graveolens (Celery).